A 384-amino-acid polypeptide reads, in one-letter code: S-adenosylmethionine synthase (384 aa).

H15 is an ATP binding site. A Mg(2+)-binding site is contributed by D17. Residue E43 participates in K(+) binding. L-methionine-binding residues include E56 and Q99. Positions 99 to 109 are flexible loop; it reads QSPDINQGVDR. ATP-binding positions include 164 to 166, 230 to 231, D239, 245 to 246, A262, and K266; these read DAK, RF, and RK. Residue D239 coordinates L-methionine. Residue K270 participates in L-methionine binding.

Belongs to the AdoMet synthase family. As to quaternary structure, homotetramer; dimer of dimers. Requires Mg(2+) as cofactor. It depends on K(+) as a cofactor.

Its subcellular location is the cytoplasm. The catalysed reaction is L-methionine + ATP + H2O = S-adenosyl-L-methionine + phosphate + diphosphate. It participates in amino-acid biosynthesis; S-adenosyl-L-methionine biosynthesis; S-adenosyl-L-methionine from L-methionine: step 1/1. Catalyzes the formation of S-adenosylmethionine (AdoMet) from methionine and ATP. The overall synthetic reaction is composed of two sequential steps, AdoMet formation and the subsequent tripolyphosphate hydrolysis which occurs prior to release of AdoMet from the enzyme. This is S-adenosylmethionine synthase from Photobacterium profundum (strain SS9).